The following is a 249-amino-acid chain: Protein YIPF4 (249 aa).

The span at M1 to F15 shows a compositional bias: pro residues. Positions M1–P40 are disordered. Residues M1–D116 lie on the Cytoplasmic side of the membrane. A compositionally biased stretch (polar residues) spans T16 to S26. Residues N117–G137 form a helical membrane-spanning segment. Position 138 (Q138) is a topological domain, lumenal. Residues F139–L159 form a helical membrane-spanning segment. The Cytoplasmic portion of the chain corresponds to A160–Q171. Residues V172–V192 traverse the membrane as a helical segment. Over V193–S200 the chain is Lumenal. A helical membrane pass occupies residues T201–G221. Residues E222–K228 are Cytoplasmic-facing. The chain crosses the membrane as a helical span at residues P229–V249.

This sequence belongs to the YIP1 family.

Its subcellular location is the golgi apparatus. The protein resides in the cis-Golgi network membrane. Its function is as follows. Involved in the maintenance of the Golgi structure. The protein is Protein YIPF4 (YIPF4) of Gallus gallus (Chicken).